The primary structure comprises 115 residues: U3-lycotoxin-Ls1j (115 aa).

An N-terminal signal peptide occupies residues 1 to 20; it reads MKFVLLFGVFLVTLFSYSSA. Residues 21–44 constitute a propeptide that is removed on maturation; sequence EMLDDFDQADEDELLSLIEKEEAR. Disulfide bonds link Cys48-Cys63, Cys55-Cys72, Cys62-Cys87, and Cys74-Cys85.

This sequence belongs to the neurotoxin 19 (CSTX) family. 01 subfamily. Expressed by the venom gland.

It localises to the secreted. The polypeptide is U3-lycotoxin-Ls1j (Lycosa singoriensis (Wolf spider)).